A 156-amino-acid polypeptide reads, in one-letter code: Small ribosomal subunit protein uS7 (156 aa).

This sequence belongs to the universal ribosomal protein uS7 family. As to quaternary structure, part of the 30S ribosomal subunit. Contacts proteins S9 and S11.

Functionally, one of the primary rRNA binding proteins, it binds directly to 16S rRNA where it nucleates assembly of the head domain of the 30S subunit. Is located at the subunit interface close to the decoding center, probably blocks exit of the E-site tRNA. The protein is Small ribosomal subunit protein uS7 of Lactobacillus johnsonii (strain CNCM I-12250 / La1 / NCC 533).